The sequence spans 460 residues: Serine--tRNA ligase (460 aa).

Position 242-244 (242-244 (TAE)) interacts with L-serine. Residues 273 to 275 (RRE) and valine 289 contribute to the ATP site. Position 296 (glutamate 296) interacts with L-serine. Position 369 to 372 (369 to 372 (EVSS)) interacts with ATP. Serine 405 lines the L-serine pocket.

This sequence belongs to the class-II aminoacyl-tRNA synthetase family. Type-1 seryl-tRNA synthetase subfamily. In terms of assembly, homodimer. The tRNA molecule binds across the dimer.

It is found in the cytoplasm. The enzyme catalyses tRNA(Ser) + L-serine + ATP = L-seryl-tRNA(Ser) + AMP + diphosphate + H(+). It carries out the reaction tRNA(Sec) + L-serine + ATP = L-seryl-tRNA(Sec) + AMP + diphosphate + H(+). The protein operates within aminoacyl-tRNA biosynthesis; selenocysteinyl-tRNA(Sec) biosynthesis; L-seryl-tRNA(Sec) from L-serine and tRNA(Sec): step 1/1. Functionally, catalyzes the attachment of serine to tRNA(Ser). Is also able to aminoacylate tRNA(Sec) with serine, to form the misacylated tRNA L-seryl-tRNA(Sec), which will be further converted into selenocysteinyl-tRNA(Sec). The chain is Serine--tRNA ligase from Haloquadratum walsbyi (strain DSM 16790 / HBSQ001).